The following is a 343-amino-acid chain: Holliday junction branch migration complex subunit RuvB (343 aa).

Positions 1–181 are large ATPase domain (RuvB-L); the sequence is MDRIVEIEKV…FGMQFRLQFY (181 aa). ATP is bound by residues L20, R21, G62, K65, T66, T67, 128–130, R171, Y181, and R218; that span reads EDF. Residue T66 coordinates Mg(2+). The small ATPAse domain (RuvB-S) stretch occupies residues 182 to 252; the sequence is TDNELARIIS…RAKSSLDSLG (71 aa). The tract at residues 255–343 is head domain (RuvB-H); the sequence is DLGFDEMDLK…EKQNKGLFNE (89 aa). Residues R308 and R313 each coordinate DNA.

It belongs to the RuvB family. In terms of assembly, homohexamer. Forms an RuvA(8)-RuvB(12)-Holliday junction (HJ) complex. HJ DNA is sandwiched between 2 RuvA tetramers; dsDNA enters through RuvA and exits via RuvB. An RuvB hexamer assembles on each DNA strand where it exits the tetramer. Each RuvB hexamer is contacted by two RuvA subunits (via domain III) on 2 adjacent RuvB subunits; this complex drives branch migration. In the full resolvosome a probable DNA-RuvA(4)-RuvB(12)-RuvC(2) complex forms which resolves the HJ.

It localises to the cytoplasm. It carries out the reaction ATP + H2O = ADP + phosphate + H(+). Functionally, the RuvA-RuvB-RuvC complex processes Holliday junction (HJ) DNA during genetic recombination and DNA repair, while the RuvA-RuvB complex plays an important role in the rescue of blocked DNA replication forks via replication fork reversal (RFR). RuvA specifically binds to HJ cruciform DNA, conferring on it an open structure. The RuvB hexamer acts as an ATP-dependent pump, pulling dsDNA into and through the RuvAB complex. RuvB forms 2 homohexamers on either side of HJ DNA bound by 1 or 2 RuvA tetramers; 4 subunits per hexamer contact DNA at a time. Coordinated motions by a converter formed by DNA-disengaged RuvB subunits stimulates ATP hydrolysis and nucleotide exchange. Immobilization of the converter enables RuvB to convert the ATP-contained energy into a lever motion, pulling 2 nucleotides of DNA out of the RuvA tetramer per ATP hydrolyzed, thus driving DNA branch migration. The RuvB motors rotate together with the DNA substrate, which together with the progressing nucleotide cycle form the mechanistic basis for DNA recombination by continuous HJ branch migration. Branch migration allows RuvC to scan DNA until it finds its consensus sequence, where it cleaves and resolves cruciform DNA. The polypeptide is Holliday junction branch migration complex subunit RuvB (Campylobacter fetus subsp. fetus (strain 82-40)).